Reading from the N-terminus, the 65-residue chain is uncharacterized protein (65 aa).

The tract at residues 24–65 is disordered; sequence NNNNNNNNNNNNNNNNNNNNNNNNNNNNNNNKNNKNNNKNND.

This is an uncharacterized protein from Dictyostelium discoideum (Social amoeba).